Consider the following 235-residue polypeptide: Glycerol-3-phosphate acyltransferase (235 aa).

6 consecutive transmembrane segments (helical) span residues 4 to 24 (LLAILAVSYIIGSIPTSLVAG), 56 to 76 (VVTLIDIVKGVVAAVSVVAFF), 94 to 114 (LLAGMSAVIGHVFTLFAGFKG), 122 to 142 (AGMLIGIAPVSMLMVVGIFLL), 152 to 172 (VASMLAAIAFPLIIAIRKYIF), and 191 to 211 (FHDSLDYHLMIFGLIVALAIL).

Belongs to the PlsY family. In terms of assembly, probably interacts with PlsX.

The protein localises to the cell inner membrane. The catalysed reaction is an acyl phosphate + sn-glycerol 3-phosphate = a 1-acyl-sn-glycero-3-phosphate + phosphate. Its pathway is lipid metabolism; phospholipid metabolism. Its function is as follows. Catalyzes the transfer of an acyl group from acyl-phosphate (acyl-PO(4)) to glycerol-3-phosphate (G3P) to form lysophosphatidic acid (LPA). This enzyme utilizes acyl-phosphate as fatty acyl donor, but not acyl-CoA or acyl-ACP. The protein is Glycerol-3-phosphate acyltransferase of Pelodictyon phaeoclathratiforme (strain DSM 5477 / BU-1).